An 88-amino-acid polypeptide reads, in one-letter code: HssA/B-like protein 17 (88 aa).

Belongs to the hssA/B family.

The protein is HssA/B-like protein 17 (hssl17) of Dictyostelium discoideum (Social amoeba).